Reading from the N-terminus, the 287-residue chain is Probable prolyl 4-hydroxylase 3 (287 aa).

Residues 1-16 lie on the Cytoplasmic side of the membrane; the sequence is MAKLRHSRFQARKWST. The helical; Signal-anchor for type II membrane protein transmembrane segment at 17 to 37 threads the bilayer; it reads LMLVLFMLFMLTIVLLMLLAF. Over 38–287 the chain is Lumenal; that stretch reads GVFSLPINND…KWMHVGEYKI (250 aa). The region spanning 159-282 is the Fe2OG dioxygenase domain; that stretch reads HGEGLQVLHY…KWSSTKWMHV (124 aa). 2 residues coordinate Fe cation: H177 and D179. The N-linked (GlcNAc...) asparagine glycan is linked to N218. Residue H263 participates in Fe cation binding. Residue K273 coordinates 2-oxoglutarate.

This sequence belongs to the P4HA family. Fe(2+) is required as a cofactor. Requires L-ascorbate as cofactor.

The protein localises to the endoplasmic reticulum membrane. The enzyme catalyses L-prolyl-[collagen] + 2-oxoglutarate + O2 = trans-4-hydroxy-L-prolyl-[collagen] + succinate + CO2. Its function is as follows. Catalyzes the post-translational formation of 4-hydroxyproline in -Xaa-Pro-Gly- sequences in proline-rich peptide sequences of plant glycoproteins and other proteins. Hydroxyprolines are important constituent of many plant cell wall glycoproteins such as extensins, hydroxyproline-rich glycoproteins, lectins and arabinogalactan proteins. This chain is Probable prolyl 4-hydroxylase 3, found in Arabidopsis thaliana (Mouse-ear cress).